A 161-amino-acid polypeptide reads, in one-letter code: 2-C-methyl-D-erythritol 2,4-cyclodiphosphate synthase (161 aa).

A divalent metal cation contacts are provided by D8 and H10. 4-CDP-2-C-methyl-D-erythritol 2-phosphate contacts are provided by residues 8–10 (DVH) and 34–35 (HS). H42 lines the a divalent metal cation pocket. 4-CDP-2-C-methyl-D-erythritol 2-phosphate is bound by residues 56 to 58 (DIG), 61 to 65 (FPDTD), 100 to 106 (AQSPKMA), 132 to 135 (TTEE), and F139.

This sequence belongs to the IspF family. Homotrimer. A divalent metal cation serves as cofactor.

The catalysed reaction is 4-CDP-2-C-methyl-D-erythritol 2-phosphate = 2-C-methyl-D-erythritol 2,4-cyclic diphosphate + CMP. It functions in the pathway isoprenoid biosynthesis; isopentenyl diphosphate biosynthesis via DXP pathway; isopentenyl diphosphate from 1-deoxy-D-xylulose 5-phosphate: step 4/6. Involved in the biosynthesis of isopentenyl diphosphate (IPP) and dimethylallyl diphosphate (DMAPP), two major building blocks of isoprenoid compounds. Catalyzes the conversion of 4-diphosphocytidyl-2-C-methyl-D-erythritol 2-phosphate (CDP-ME2P) to 2-C-methyl-D-erythritol 2,4-cyclodiphosphate (ME-CPP) with a corresponding release of cytidine 5-monophosphate (CMP). The sequence is that of 2-C-methyl-D-erythritol 2,4-cyclodiphosphate synthase from Clostridioides difficile (strain 630) (Peptoclostridium difficile).